A 486-amino-acid chain; its full sequence is Shutoff alkaline exonuclease (486 aa).

Belongs to the herpesviridae alkaline nuclease family. In terms of assembly, forms a complex with the DNA polymerase, the DNA polymerase processivity factor, and the major DNA binding protein.

The protein localises to the host nucleus. Its subcellular location is the host cytoplasm. Plays a role in processing non linear or branched viral DNA intermediates in order to promote the production of mature packaged unit-length linear progeny viral DNA molecules. Exhibits endonuclease and exonuclease activities and accepts both double-stranded and single-stranded DNA as substrate. Exonuclease digestion of DNA is in the 5'-&gt; 3' direction and the products are 5'-monophosphate nucleosides. Additionally, forms a recombinase with the major DNA-binding protein, which displays strand exchange activity. Also acts as a cytoplasmic RNA endonuclease that induces degradation of the majority of the cellular messenger RNAs during early lytic infection. The resulting inhibition of cellular protein synthesis serves to ensure maximal viral gene expression and evasion from host immune response. Internally cleaves host mRNAs which are then degraded by the cellular exonuclease XRN1. Bypasses therefore the regulatory steps of deadenylation and decapping normally required for XRN1 activation. In addition, inhibits host inflammasome activation to promote viral lytic replication by interacting with host AIM2 and disrupting its polymerization. This is Shutoff alkaline exonuclease (ORF37) from Human herpesvirus 8 type P (isolate GK18) (HHV-8).